A 308-amino-acid polypeptide reads, in one-letter code: N-acetylmuramic acid 6-phosphate etherase (308 aa).

In terms of domain architecture, SIS spans 59 to 222 (TAERLRHGGR…STGVMVKLGK (164 aa)). The active-site Proton donor is the Glu87. Glu118 is a catalytic residue.

The protein belongs to the GCKR-like family. MurNAc-6-P etherase subfamily. Homodimer.

The catalysed reaction is N-acetyl-D-muramate 6-phosphate + H2O = N-acetyl-D-glucosamine 6-phosphate + (R)-lactate. Its pathway is amino-sugar metabolism; N-acetylmuramate degradation. In terms of biological role, specifically catalyzes the cleavage of the D-lactyl ether substituent of MurNAc 6-phosphate, producing GlcNAc 6-phosphate and D-lactate. The sequence is that of N-acetylmuramic acid 6-phosphate etherase from Nostoc punctiforme (strain ATCC 29133 / PCC 73102).